The chain runs to 335 residues: Glyceraldehyde-3-phosphate dehydrogenase (335 aa).

Residues 12 to 13 (RI), Asp34, Arg78, and Ser120 each bind NAD(+). D-glyceraldehyde 3-phosphate is bound by residues 151–153 (SCT) and Thr182. Cys152 (nucleophile) is an active-site residue. Asn183 is a binding site for NAD(+). D-glyceraldehyde 3-phosphate is bound by residues Arg197, 210–211 (TG), and Arg233. Residue Asn315 participates in NAD(+) binding.

Belongs to the glyceraldehyde-3-phosphate dehydrogenase family. In terms of assembly, homotetramer.

It is found in the cytoplasm. It carries out the reaction D-glyceraldehyde 3-phosphate + phosphate + NAD(+) = (2R)-3-phospho-glyceroyl phosphate + NADH + H(+). The protein operates within carbohydrate degradation; glycolysis; pyruvate from D-glyceraldehyde 3-phosphate: step 1/5. In terms of biological role, catalyzes the oxidative phosphorylation of glyceraldehyde 3-phosphate (G3P) to 1,3-bisphosphoglycerate (BPG) using the cofactor NAD. The first reaction step involves the formation of a hemiacetal intermediate between G3P and a cysteine residue, and this hemiacetal intermediate is then oxidized to a thioester, with concomitant reduction of NAD to NADH. The reduced NADH is then exchanged with the second NAD, and the thioester is attacked by a nucleophilic inorganic phosphate to produce BPG. This Geobacillus stearothermophilus (Bacillus stearothermophilus) protein is Glyceraldehyde-3-phosphate dehydrogenase (gap).